The sequence spans 385 residues: Flap endonuclease 1 (385 aa).

Residues M1 to R105 form an N-domain region. Mg(2+) is bound at residue D34. DNA is bound by residues R47 and R71. Residues D87, E156, E158, D177, and D179 each contribute to the Mg(2+) site. The tract at residues E120 to H251 is I-domain. E156 contributes to the DNA binding site. DNA is bound by residues G229 and D231. A Mg(2+)-binding site is contributed by D231. The interval V338–F346 is interaction with PCNA. Residues L356–K370 are compositionally biased toward low complexity. Positions L356–K385 are disordered. The segment covering K376–K385 has biased composition (basic residues).

Belongs to the XPG/RAD2 endonuclease family. FEN1 subfamily. Interacts with PCNA. Three molecules of FEN1 bind to one PCNA trimer with each molecule binding to one PCNA monomer. PCNA stimulates the nuclease activity without altering cleavage specificity. It depends on Mg(2+) as a cofactor. Phosphorylated. Phosphorylation upon DNA damage induces relocalization to the nuclear plasma.

The protein resides in the nucleus. It is found in the nucleolus. It localises to the nucleoplasm. Its subcellular location is the mitochondrion. Its function is as follows. Structure-specific nuclease with 5'-flap endonuclease and 5'-3' exonuclease activities involved in DNA replication and repair. During DNA replication, cleaves the 5'-overhanging flap structure that is generated by displacement synthesis when DNA polymerase encounters the 5'-end of a downstream Okazaki fragment. It enters the flap from the 5'-end and then tracks to cleave the flap base, leaving a nick for ligation. Also involved in the long patch base excision repair (LP-BER) pathway, by cleaving within the apurinic/apyrimidinic (AP) site-terminated flap. Acts as a genome stabilization factor that prevents flaps from equilibrating into structures that lead to duplications and deletions. Also possesses 5'-3' exonuclease activity on nicked or gapped double-stranded DNA, and exhibits RNase H activity. Also involved in replication and repair of rDNA and in repairing mitochondrial DNA. The sequence is that of Flap endonuclease 1 from Lachancea thermotolerans (strain ATCC 56472 / CBS 6340 / NRRL Y-8284) (Yeast).